The sequence spans 451 residues: Cyclin-dependent kinase 18 (451 aa).

5 positions are modified to phosphoserine: Ser12, Ser51, Ser66, Ser75, and Ser109. In terms of domain architecture, Protein kinase spans 121 to 402 (YVKLDKLGEG…AEAALNHPYF (282 aa)). Residues 127–135 (LGEGTYATV) and Lys150 contribute to the ATP site. Asp242 (proton acceptor) is an active-site residue. Phosphoserine occurs at positions 417 and 420.

The protein belongs to the protein kinase superfamily. CMGC Ser/Thr protein kinase family. CDC2/CDKX subfamily. As to expression, in brain, kidney, intestine and at a much lower level, in fetal tissues.

The catalysed reaction is L-seryl-[protein] + ATP = O-phospho-L-seryl-[protein] + ADP + H(+). It catalyses the reaction L-threonyl-[protein] + ATP = O-phospho-L-threonyl-[protein] + ADP + H(+). May play a role in signal transduction cascades in terminally differentiated cells. In Mus musculus (Mouse), this protein is Cyclin-dependent kinase 18 (Cdk18).